A 403-amino-acid chain; its full sequence is Argininosuccinate synthase (403 aa).

ATP contacts are provided by residues 12–20 and Ala39; that span reads AYSGGLDTS. Tyr90 and Ser95 together coordinate L-citrulline. Gly120 lines the ATP pocket. The L-aspartate site is built by Thr122, Asn126, and Asp127. Residue Asn126 participates in L-citrulline binding. L-citrulline contacts are provided by Arg130, Ser182, Ser191, Glu267, and Tyr279.

Belongs to the argininosuccinate synthase family. Type 1 subfamily. As to quaternary structure, homotetramer.

Its subcellular location is the cytoplasm. It catalyses the reaction L-citrulline + L-aspartate + ATP = 2-(N(omega)-L-arginino)succinate + AMP + diphosphate + H(+). Its pathway is amino-acid biosynthesis; L-arginine biosynthesis; L-arginine from L-ornithine and carbamoyl phosphate: step 2/3. The polypeptide is Argininosuccinate synthase (Vesicomyosocius okutanii subsp. Calyptogena okutanii (strain HA)).